The sequence spans 297 residues: Phosphoribosylaminoimidazole-succinocarboxamide synthase (297 aa).

This sequence belongs to the SAICAR synthetase family.

The enzyme catalyses 5-amino-1-(5-phospho-D-ribosyl)imidazole-4-carboxylate + L-aspartate + ATP = (2S)-2-[5-amino-1-(5-phospho-beta-D-ribosyl)imidazole-4-carboxamido]succinate + ADP + phosphate + 2 H(+). It functions in the pathway purine metabolism; IMP biosynthesis via de novo pathway; 5-amino-1-(5-phospho-D-ribosyl)imidazole-4-carboxamide from 5-amino-1-(5-phospho-D-ribosyl)imidazole-4-carboxylate: step 1/2. The sequence is that of Phosphoribosylaminoimidazole-succinocarboxamide synthase from Corynebacterium diphtheriae (strain ATCC 700971 / NCTC 13129 / Biotype gravis).